Reading from the N-terminus, the 663-residue chain is Syntabulin (663 aa).

Disordered regions lie at residues 1–202 (MGPL…PREK) and 216–267 (VNIH…PEQY). Residues 2–417 (GPLRESKKEH…DTMADGLSLE (416 aa)) are sufficient for interaction with KIF5B. At serine 50 the chain carries Phosphoserine. The span at 57 to 73 (FNPSSSGRSARTVSSNS) shows a compositional bias: low complexity. Positions 81–97 (CPSSQSVSPVKTPSDAG) are enriched in polar residues. At serine 107 the chain carries Phosphoserine. 3 stretches are compositionally biased toward low complexity: residues 145–158 (EADFSSSSSTGSIS), 188–198 (SSHKPGSSPSS), and 221–241 (SYAPSSPSSSNSGSYKGSDCS). The stretch at 271 to 353 (LQQKEVTVRH…MRSSLADKDK (83 aa)) forms a coiled coil. The tract at residues 310-417 (REDWIEEECH…DTMADGLSLE (108 aa)) is sufficient for interaction with STX1A. Phosphoserine is present on residues serine 396 and serine 555. The helical transmembrane segment at 606 to 626 (SFLVDLLAVAAPVVPTVLWAF) threads the bilayer.

As to quaternary structure, interacts with STX1A and KIF5B. Isoform 3, isoform 4 and isoform 5 are expressed in HeLa cell line (at protein level). Isoform 3 is expressed in fetal and adult brain. Isoform 4 is expressed in numerous fetal tissues (brain, kidney, liver, lung, and thymus) and in adult brain, kidney, liver, lung, pancreas, colon, prostate, small intestine, testis and thymus. Isoform 5 is expressed in fetal brain, brain and small intestine.

It localises to the cytoplasm. It is found in the cytoskeleton. The protein localises to the cytoplasmic vesicle. Its subcellular location is the golgi apparatus membrane. Functionally, part of a kinesin motor-adapter complex that is critical for the anterograde axonal transport of active zone components and contributes to activity-dependent presynaptic assembly during neuronal development. This Homo sapiens (Human) protein is Syntabulin (SYBU).